The chain runs to 302 residues: MPINIPKDLPAKEILEQENIFVMDEERAYSQDIRPLNIVILNLMPEKEKAETQLLRLLGNSPLQVNVTFLRPATHESKTTSKHHLEQFYTIFPHIRHRKFDGMIITGAPVEQMPFEKVTYWSELTEIMEWTKTNVTSTLHICWGAQAGLYYHYGIPKYPLPQKCFGIFEHSLEVKNVKLLRGFDDVFRMPHSRHTDVKREDIEKIPELTILSVSEKAGVCLVASNDGKQIFLTGHPEYDATTLKEEYERDLAKGLPIHIPESYFPNDDPTKEPLNTWRSHANLLFVNWLNYYVYQETPYEWE.

C142 functions as the Acyl-thioester intermediate in the catalytic mechanism. The substrate site is built by K163 and S192. H235 functions as the Proton acceptor in the catalytic mechanism. Residue E237 is part of the active site. R249 contributes to the substrate binding site.

The protein belongs to the MetA family.

The protein localises to the cytoplasm. It catalyses the reaction L-homoserine + acetyl-CoA = O-acetyl-L-homoserine + CoA. The protein operates within amino-acid biosynthesis; L-methionine biosynthesis via de novo pathway; O-acetyl-L-homoserine from L-homoserine: step 1/1. Its function is as follows. Transfers an acetyl group from acetyl-CoA to L-homoserine, forming acetyl-L-homoserine. This is Homoserine O-acetyltransferase from Geobacillus sp. (strain WCH70).